We begin with the raw amino-acid sequence, 385 residues long: MNNQFKLKNKKIKPVSILIILFVGFLFLISLIGFIFTSFYTIDLKLAIFFEKGFKYEIVRYWSIFYDILGTTELMVFILFNIMVLIESWFLLKSKTKKDNFWKKNKWILKLVYITVYVVFVVIKCITTYFKINADNGFGYGGDAIYLLSSKYRNICLIVSLVIHCIGLFVGFYIIHYKFKNDPIYLVDKYWIQAVKILFIVLISYTILVLLKGMTSRPYYYNIIYGDLLKQVKLNGHNDWVDHYLNQSTFKHGFNIGDNKYANNIPGEWPWYRINGGLFRPDKNLVQFKHWFDWAFPSGHIGATLIVGCTFFYFLTNNQKLTPLKITLLALYFLHLVSMSFAIVVNRGHWVSDITFTYLWLLPLIFLTHFFNSFFKFKDIGCKKY.

Transmembrane regions (helical) follow at residues isoleucine 17 to threonine 37, threonine 72 to leucine 92, tryptophan 107 to threonine 127, isoleucine 155 to isoleucine 175, tryptophan 191 to leucine 211, alanine 295 to leucine 315, isoleucine 326 to asparagine 346, and isoleucine 354 to phenylalanine 374.

Its subcellular location is the membrane. This is an uncharacterized protein from Mycoplasma capricolum subsp. capricolum (strain California kid / ATCC 27343 / NCTC 10154).